The sequence spans 337 residues: MYSVSIIGASGYTGAQLVQLVLQHPKLELAGTYVSENSNDANKSIAELHGNLAHVNATLTPISDTALSEMANGVDFIFLATPHEASHDWMPILSSGKAKVLDLSGAFRIKDTAVFEQFYGFPHTQTQSLAQAVYGLAEWHEAQIASADVIAVPGCYPTASLSALKPLAHNGLLDESVRPVINAVSGVSGAGRKASLTTSFFEVSLQAYGVLGHRHTPEIEAYLGTPVIFTPHLGNFKRGILATVTVKVKAGTTSAQLEKAYTDAYADKPIVRLRKSFPKIDDVAHTPFVDLHWKLDEASGYAVVTAAIDNVMKGAASQAIQCLNIMTKQPIETGLVL.

The active site involves cysteine 155.

The protein belongs to the NAGSA dehydrogenase family. Type 1 subfamily.

Its subcellular location is the cytoplasm. It catalyses the reaction N-acetyl-L-glutamate 5-semialdehyde + phosphate + NADP(+) = N-acetyl-L-glutamyl 5-phosphate + NADPH + H(+). The protein operates within amino-acid biosynthesis; L-arginine biosynthesis; N(2)-acetyl-L-ornithine from L-glutamate: step 3/4. Its function is as follows. Catalyzes the NADPH-dependent reduction of N-acetyl-5-glutamyl phosphate to yield N-acetyl-L-glutamate 5-semialdehyde. The protein is N-acetyl-gamma-glutamyl-phosphate reductase of Alteromonas mediterranea (strain DSM 17117 / CIP 110805 / LMG 28347 / Deep ecotype).